Reading from the N-terminus, the 298-residue chain is NAD kinase (298 aa).

Asp-80 serves as the catalytic Proton acceptor. NAD(+)-binding positions include 80-81 (DG), 154-155 (ND), Arg-182, Asp-184, 195-200 (TAYALS), Ala-219, and Gln-253.

Belongs to the NAD kinase family. Requires a divalent metal cation as cofactor.

Its subcellular location is the cytoplasm. The catalysed reaction is NAD(+) + ATP = ADP + NADP(+) + H(+). In terms of biological role, involved in the regulation of the intracellular balance of NAD and NADP, and is a key enzyme in the biosynthesis of NADP. Catalyzes specifically the phosphorylation on 2'-hydroxyl of the adenosine moiety of NAD to yield NADP. The polypeptide is NAD kinase (Delftia acidovorans (strain DSM 14801 / SPH-1)).